Here is a 91-residue protein sequence, read N- to C-terminus: DNA-directed RNA polymerase subunit omega (91 aa).

Belongs to the RNA polymerase subunit omega family. In terms of assembly, the RNAP catalytic core consists of 2 alpha, 1 beta, 1 beta' and 1 omega subunit. When a sigma factor is associated with the core the holoenzyme is formed, which can initiate transcription.

It carries out the reaction RNA(n) + a ribonucleoside 5'-triphosphate = RNA(n+1) + diphosphate. In terms of biological role, promotes RNA polymerase assembly. Latches the N- and C-terminal regions of the beta' subunit thereby facilitating its interaction with the beta and alpha subunits. The chain is DNA-directed RNA polymerase subunit omega from Yersinia enterocolitica serotype O:8 / biotype 1B (strain NCTC 13174 / 8081).